The following is a 684-amino-acid chain: Methionine--tRNA ligase (684 aa).

The 'HIGH' region motif lies at 12 to 22; the sequence is PYANGSIHLGH. Zn(2+) is bound by residues cysteine 143, cysteine 146, cysteine 156, and cysteine 159. Positions 339–343 match the 'KMSKS' region motif; sequence KMSKS. An ATP-binding site is contributed by lysine 342. In terms of domain architecture, tRNA-binding spans 581 to 684; it reads DFMKIDMRVA…AGAQPGDKVG (104 aa).

This sequence belongs to the class-I aminoacyl-tRNA synthetase family. MetG type 1 subfamily. As to quaternary structure, homodimer. It depends on Zn(2+) as a cofactor.

It is found in the cytoplasm. It carries out the reaction tRNA(Met) + L-methionine + ATP = L-methionyl-tRNA(Met) + AMP + diphosphate. Functionally, is required not only for elongation of protein synthesis but also for the initiation of all mRNA translation through initiator tRNA(fMet) aminoacylation. The polypeptide is Methionine--tRNA ligase (Neisseria gonorrhoeae (strain ATCC 700825 / FA 1090)).